The sequence spans 355 residues: Na(+)/H(+) exchange regulatory cofactor NHE-RF1 (355 aa).

Serine 2 bears the N-acetylserine mark. Phosphoserine is present on residues serine 2 and serine 46. In terms of domain architecture, PDZ 1 spans 14-94; that stretch reads LCCLEKGPNG…AVRLLVVDPE (81 aa). Composition is skewed to basic and acidic residues over residues 110–119 and 127–146; these read LLRPQEKSEQ and DTHE…RELR. A disordered region spans residues 110–146; it reads LLRPQEKSEQAEPPAAADTHEAGDQNEAEKSHLRELR. Residues 149–229 form the PDZ 2 domain; sequence LCTMKKGPNG…EAKLLVVDKE (81 aa). A disordered region spans residues 244–355; that stretch reads EHLDGPLPEP…SKKNELFSNL (112 aa). Residues 259–268 show a composition bias toward basic and acidic residues; the sequence is IQKESSREAL. 4 positions are modified to phosphoserine: serine 264, serine 275, serine 285, and serine 286. The segment covering 270–286 has biased composition (low complexity); it reads EPASESPRPALARSASS. The residue at position 288 (threonine 288) is a Phosphothreonine. Phosphoserine is present on residues serine 289, serine 294, and serine 297. Residues 303–323 show a composition bias toward low complexity; that stretch reads STEPSSTSSSSSDPILDLNIS. The span at 345–355 shows a compositional bias: basic and acidic residues; the sequence is WSKKNELFSNL.

As to quaternary structure, homodimer, and heterodimer with NHERF2. Binds the N-termini of EZR, RDX and MSN. Binds the C-termini of PDGFRA, PDGFRB, ADRB2 and NOS2. Binds ARHGAP17, EPI64, RACK1, OPRK1, GNAQ, CTNNB1, PLCB3 and CLCN3. Forms a complex with CFTR and SLC4A7. Forms a complex with SLC4A7 and ATP6V1B1. Binds PDZK1. Binds the C-terminus of PAG1. In resting T-cells, part of a PAG1-NHERF1-MSN complex which is disrupted upon TCR activation. Directly interacts with HTR4. Interacts with MCC. Interacts with TRPC4 (via the PDZ-binding domain). Interacts (via the PDZ 1 domain) with PODXL (via the C-terminal PDZ-binding motif DTHL); interaction is not detected in glomerular epithelium cells. Interacts (via the PDZ 1 domain) with PODXL (via the C-terminal PDZ-binding motif DTHL); the interaction take place early in the secretory pathway and is necessary for its apical membrane sorting. Interacts with SLC34A1. Interacts with CFTR, SLC26A3 and SLC26A6. Interacts (via PDZ domains) with ACE2 (via PDZ-binding motif); the interaction may enhance ACE2 membrane residence. As to expression, expressed in spermatogenic cells.

Its subcellular location is the cytoplasm. The protein localises to the apical cell membrane. The protein resides in the cell projection. It localises to the filopodium. It is found in the ruffle. Its subcellular location is the microvillus. The protein localises to the endomembrane system. Functionally, scaffold protein that connects plasma membrane proteins with members of the ezrin/moesin/radixin family and thereby helps to link them to the actin cytoskeleton and to regulate their surface expression. Necessary for recycling of internalized ADRB2. Was first known to play a role in the regulation of the activity and subcellular location of SLC9A3. Necessary for cAMP-mediated phosphorylation and inhibition of SLC9A3. May enhance Wnt signaling. May participate in HTR4 targeting to microvilli. Involved in the regulation of phosphate reabsorption in the renal proximal tubules. Involved in sperm capacitation. May participate in the regulation of the chloride and bicarbonate homeostasis in spermatozoa. In Mus musculus (Mouse), this protein is Na(+)/H(+) exchange regulatory cofactor NHE-RF1 (Nherf1).